A 292-amino-acid chain; its full sequence is ATP synthase gamma chain (292 aa).

Belongs to the ATPase gamma chain family. F-type ATPases have 2 components, CF(1) - the catalytic core - and CF(0) - the membrane proton channel. CF(1) has five subunits: alpha(3), beta(3), gamma(1), delta(1), epsilon(1). CF(0) has three main subunits: a, b and c.

Its subcellular location is the cell inner membrane. Its function is as follows. Produces ATP from ADP in the presence of a proton gradient across the membrane. The gamma chain is believed to be important in regulating ATPase activity and the flow of protons through the CF(0) complex. In Nitrobacter hamburgensis (strain DSM 10229 / NCIMB 13809 / X14), this protein is ATP synthase gamma chain.